The primary structure comprises 3977 residues: Hybrid PKS-NRPS synthetase gkaA (3977 aa).

In terms of domain architecture, Ketosynthase family 3 (KS3) spans 4–441 (EEPIAVIGSG…GTNAHVILEN (438 aa)). Residues Cys177, His316, and His361 each act as for beta-ketoacyl synthase activity in the active site. The Malonyl-CoA:ACP transacylase (MAT) domain occupies 551-867 (VFTGQGAQWP…TGVIHRGKND (317 aa)). The tract at residues 937–1072 (NPLLGTRTTD…GRITVTLGES (136 aa)) is N-terminal hotdog fold. Residues 937-1241 (NPLLGTRTTD…VVAFSEATAD (305 aa)) form the PKS/mFAS DH domain. The Proton acceptor; for dehydratase activity role is filled by His969. Residues 1087–1241 (LVSIPQDRFY…VVAFSEATAD (155 aa)) are C-terminal hotdog fold. Asp1147 functions as the Proton donor; for dehydratase activity in the catalytic mechanism. The segment at 1286–1580 (YMKKTVEEFP…FSGIDSSTPE (295 aa)) is methyltransferase (cMeT) domain. In terms of domain architecture, Ketoreductase (KR) spans 2128 to 2301 (TYVLFGLTSD…AASILHIGAV (174 aa)). The Carrier 1 domain maps to 2409 to 2490 (SEVFEIISGA…QLLEYAIDNM (82 aa)). O-(pantetheine 4'-phosphoryl)serine is present on Ser2450. The segment at 2497–2542 (HSNGEQGTVSDSGSTNIQLTPASTPSVPSVNLASDSTGSSQVGEDV) is disordered. Positions 2499–2538 (NGEQGTVSDSGSTNIQLTPASTPSVPSVNLASDSTGSSQV) are enriched in polar residues. The condensation stretch occupies residues 2584–3018 (EKIIPMSPGQ…LKDISLFSKE (435 aa)). The adenylation stretch occupies residues 3048 to 3437 (IAEHPDTISI…GALEILGRID (390 aa)). Residues 3552–3632 (FSLTPTEDKL…AMASLITPAS (81 aa)) form the Carrier 2 domain. Ser3592 bears the O-(pantetheine 4'-phosphoryl)serine mark. The Thioester reductase (TE) domain maps to 3672–3890 (LTGATGFLGH…FVDLVSVQNV (219 aa)).

The protein in the C-terminal section; belongs to the NRP synthetase family. Pantetheine 4'-phosphate is required as a cofactor.

Its pathway is mycotoxin biosynthesis. In terms of biological role, hybrid PKS-NRPS synthetase; part of the gene cluster that mediates the biosynthesis of GKK1032, fungal natural products containing a macrocyclic para-cyclophane connected to a decahydrofluorene ring system that show potent antitumor activities. Within the pathway, the PKS-NRPS gkaA, with the help of the trans-enoyl reductase gkaC, synthesize the polyketide-tyrosyl acyl thioester product which can be reductively off-loaded by the terminal reductase (R) domain in gkaA. The PKS module of gkaA acts in combination with the trans-acting enoyl reductase gkaC to produce a methylated polyketide attached to the ACP domain. In parallel, the adenylation (A) domain of the NRPS module activated L-tyrosine, which is then transferred to the ACP domain. The condensation (C) domain subsequently links this group to the polyketide chain, forming an enzyme-bound amide. The alpha/beta hydrolase gkaG is then required to catalyze the subsequent Knoevenagel condensation that affords the 3-pyrrolin-2-one ring, whereas the three proteins gkaB, gkadX and gkaZ then function synergistically to form the cyclophane. The chain is Hybrid PKS-NRPS synthetase gkaA from Penicillium citrinum.